The chain runs to 125 residues: Large ribosomal subunit protein bL12 (125 aa).

The protein belongs to the bacterial ribosomal protein bL12 family. As to quaternary structure, homodimer. Part of the ribosomal stalk of the 50S ribosomal subunit. Forms a multimeric L10(L12)X complex, where L10 forms an elongated spine to which 2 to 4 L12 dimers bind in a sequential fashion. Binds GTP-bound translation factors.

Forms part of the ribosomal stalk which helps the ribosome interact with GTP-bound translation factors. Is thus essential for accurate translation. The polypeptide is Large ribosomal subunit protein bL12 (Azorhizobium caulinodans (strain ATCC 43989 / DSM 5975 / JCM 20966 / LMG 6465 / NBRC 14845 / NCIMB 13405 / ORS 571)).